The sequence spans 118 residues: DNA-binding protein Msm_0708 (118 aa).

Positions 16–39 (EARQAAAQGQMQQQAQQQMQQQEA) are disordered. Residues 18–39 (RQAAAQGQMQQQAQQQMQQQEA) are compositionally biased toward low complexity.

It belongs to the PDCD5 family.

The polypeptide is DNA-binding protein Msm_0708 (Methanobrevibacter smithii (strain ATCC 35061 / DSM 861 / OCM 144 / PS)).